Here is a 113-residue protein sequence, read N- to C-terminus: Death-associated protein-like 1.L (113 aa).

The tract at residues 1–57 is disordered; the sequence is MAKEQKMQSSPQALKAGHLPAVKAGGMRVSKKQGNEENSAPEKNAKKTLQEKPSSVL.

Belongs to the DAP-DAPL1 family. Associates with ribosomes; preventing translation. Interacts with eiF5a (eif5a and eif5a2); preventing translation.

Its function is as follows. Ribosome-binding protein that promotes ribosome hibernation, a process during which ribosomes are stabilized in an inactive state and preserved from proteasomal degradation. Acts via its association with eiF5a (eif5a and eif5a2) at the polypeptide exit tunnel of the ribosome, preventing mRNA translation. Plays a key role in ribosome hibernation in the mature egg by preventing mRNA translation, leading to ribosome inactivation. Ribosomes, which are produced in large quantities during oogenesis, are stored and translationally repressed in the egg and early embryo. The sequence is that of Death-associated protein-like 1.L (dapl1.L) from Xenopus laevis (African clawed frog).